The sequence spans 372 residues: Putative glutamate--cysteine ligase 2 (372 aa).

This sequence belongs to the glutamate--cysteine ligase type 2 family. YbdK subfamily. As to quaternary structure, homodimer.

The enzyme catalyses L-cysteine + L-glutamate + ATP = gamma-L-glutamyl-L-cysteine + ADP + phosphate + H(+). In terms of biological role, ATP-dependent carboxylate-amine ligase which exhibits weak glutamate--cysteine ligase activity. The sequence is that of Putative glutamate--cysteine ligase 2 (ybdK) from Escherichia coli O1:K1 / APEC.